The chain runs to 320 residues: Peroxidase 66 (320 aa).

The N-terminal stretch at 1-29 (MAASVSASCLNRLSSLAVVLVALASAASA) is a signal peptide. Q30 carries the pyrrolidone carboxylic acid modification. 4 disulfides stabilise this stretch: C40–C118, C73–C78, C124–C315, and C202–C227. H71 functions as the Proton acceptor in the catalytic mechanism. 5 residues coordinate Ca(2+): D72, V75, G77, D79, and S81. N-linked (GlcNAc...) asparagine glycans are attached at residues N85 and N96. P165 provides a ligand contact to substrate. H195 is a binding site for heme b. A Ca(2+)-binding site is contributed by T196. The N-linked (GlcNAc...) asparagine glycan is linked to N211. 3 residues coordinate Ca(2+): D239, T242, and D247.

The protein belongs to the peroxidase family. Classical plant (class III) peroxidase subfamily. The cofactor is heme b. Ca(2+) is required as a cofactor.

Its subcellular location is the secreted. The catalysed reaction is 2 a phenolic donor + H2O2 = 2 a phenolic radical donor + 2 H2O. Functionally, removal of H(2)O(2), oxidation of toxic reductants, biosynthesis and degradation of lignin, suberization, auxin catabolism, response to environmental stresses such as wounding, pathogen attack and oxidative stress. These functions might be dependent on each isozyme/isoform in each plant tissue. In Zea mays (Maize), this protein is Peroxidase 66 (PER66).